A 173-amino-acid chain; its full sequence is NAD(P)H-quinone oxidoreductase subunit I, chloroplastic (173 aa).

4Fe-4S ferredoxin-type domains follow at residues 55-84 and 95-124; these read GRIH…VDWD and RSYS…MTEE. [4Fe-4S] cluster is bound by residues C64, C67, C70, C74, C104, C107, C110, and C114.

The protein belongs to the complex I 23 kDa subunit family. NDH is composed of at least 16 different subunits, 5 of which are encoded in the nucleus. It depends on [4Fe-4S] cluster as a cofactor.

Its subcellular location is the plastid. The protein resides in the chloroplast thylakoid membrane. It carries out the reaction a plastoquinone + NADH + (n+1) H(+)(in) = a plastoquinol + NAD(+) + n H(+)(out). It catalyses the reaction a plastoquinone + NADPH + (n+1) H(+)(in) = a plastoquinol + NADP(+) + n H(+)(out). Its function is as follows. NDH shuttles electrons from NAD(P)H:plastoquinone, via FMN and iron-sulfur (Fe-S) centers, to quinones in the photosynthetic chain and possibly in a chloroplast respiratory chain. The immediate electron acceptor for the enzyme in this species is believed to be plastoquinone. Couples the redox reaction to proton translocation, and thus conserves the redox energy in a proton gradient. The protein is NAD(P)H-quinone oxidoreductase subunit I, chloroplastic of Nephroselmis olivacea (Green alga).